Reading from the N-terminus, the 131-residue chain is Small ribosomal subunit protein uS11 (131 aa).

Belongs to the universal ribosomal protein uS11 family. In terms of assembly, part of the 30S ribosomal subunit. Interacts with proteins S7 and S18. Binds to IF-3.

Its function is as follows. Located on the platform of the 30S subunit, it bridges several disparate RNA helices of the 16S rRNA. Forms part of the Shine-Dalgarno cleft in the 70S ribosome. This is Small ribosomal subunit protein uS11 from Geobacter metallireducens (strain ATCC 53774 / DSM 7210 / GS-15).